Consider the following 226-residue polypeptide: PKHD-type hydroxylase Sde_2812 (226 aa).

Residues 78 to 178 (KIFPPLFNCY…RLASFFWLQS (101 aa)) enclose the Fe2OG dioxygenase domain. Fe cation contacts are provided by histidine 96, aspartate 98, and histidine 159. 2-oxoglutarate is bound at residue arginine 169.

Fe(2+) serves as cofactor. L-ascorbate is required as a cofactor.

This is PKHD-type hydroxylase Sde_2812 from Saccharophagus degradans (strain 2-40 / ATCC 43961 / DSM 17024).